The following is a 171-amino-acid chain: Lipoprotein signal peptidase (171 aa).

The next 3 helical transmembrane spans lie at 8–28 (SFLWLSAVAFVIDLLTKYIVV), 64–84 (WQQYFFILLALAISGMLVYFL), and 99–119 (ALIIGGALANMVDRAYNGFVV). Active-site residues include Asp120 and Asp138. A helical membrane pass occupies residues 133–153 (VFNIADIAICIGAGLLVLDAF).

This sequence belongs to the peptidase A8 family.

The protein localises to the cell inner membrane. The catalysed reaction is Release of signal peptides from bacterial membrane prolipoproteins. Hydrolyzes -Xaa-Yaa-Zaa-|-(S,diacylglyceryl)Cys-, in which Xaa is hydrophobic (preferably Leu), and Yaa (Ala or Ser) and Zaa (Gly or Ala) have small, neutral side chains.. Its pathway is protein modification; lipoprotein biosynthesis (signal peptide cleavage). In terms of biological role, this protein specifically catalyzes the removal of signal peptides from prolipoproteins. The sequence is that of Lipoprotein signal peptidase from Haemophilus influenzae (strain ATCC 51907 / DSM 11121 / KW20 / Rd).